A 423-amino-acid chain; its full sequence is Sulfate adenylyltransferase (423 aa).

It belongs to the sulfate adenylyltransferase family.

It carries out the reaction sulfate + ATP + H(+) = adenosine 5'-phosphosulfate + diphosphate. The protein operates within sulfur metabolism; hydrogen sulfide biosynthesis; sulfite from sulfate: step 1/3. In Desulfovibrio desulfuricans (strain ATCC 27774 / DSM 6949 / MB), this protein is Sulfate adenylyltransferase.